A 360-amino-acid chain; its full sequence is Cyclin-dependent kinase 10 (360 aa).

In terms of domain architecture, Protein kinase spans 39–323; sequence FEKLNRIGEG…AGDCLESSYF (285 aa). ATP is bound by residues 45–53 and Lys-68; that span reads IGEGTYGIV. Asp-163 serves as the catalytic Proton acceptor. Position 196 is a phosphothreonine (Thr-196). Residues 334–360 are disordered; sequence LMPTFPHHRNKRAAPATSEGQSKRCKP.

It belongs to the protein kinase superfamily. CMGC Ser/Thr protein kinase family. CDC2/CDKX subfamily. Heterodimer with CCNQ, the interaction is required for kinase activity. Interacts with ETS2. Interacts with PRK2.

It localises to the cytoplasm. The protein resides in the cytoskeleton. Its subcellular location is the cilium basal body. It catalyses the reaction L-seryl-[protein] + ATP = O-phospho-L-seryl-[protein] + ADP + H(+). The catalysed reaction is L-threonyl-[protein] + ATP = O-phospho-L-threonyl-[protein] + ADP + H(+). In terms of biological role, cyclin-dependent kinase that phosphorylates the transcription factor ETS2 (in vitro) and positively controls its proteasomal degradation (in cells). Involved in the regulation of actin cytoskeleton organization through the phosphorylation of actin dynamics regulators such as PKN2. Is a negative regulator of ciliogenesis through phosphorylation of PKN2 and promotion of RhoA signaling. The sequence is that of Cyclin-dependent kinase 10 (CDK10) from Homo sapiens (Human).